The following is an 806-amino-acid chain: Leucine--tRNA ligase (806 aa).

A 'HIGH' region motif is present at residues 54 to 64 (SYPSGDLHMGH). The 'KMSKS' region signature appears at 571-575 (KMSKS). Lys574 is an ATP binding site.

It belongs to the class-I aminoacyl-tRNA synthetase family.

The protein resides in the cytoplasm. It carries out the reaction tRNA(Leu) + L-leucine + ATP = L-leucyl-tRNA(Leu) + AMP + diphosphate. The chain is Leucine--tRNA ligase from Tropheryma whipplei (strain Twist) (Whipple's bacillus).